The primary structure comprises 549 residues: Solute carrier family 22 member 6 (549 aa).

Residues 1–23 are Cytoplasmic-facing; that stretch reads MAFNDLLLQLGGVGRFQKIQVTL. A helical membrane pass occupies residues 24–44; that stretch reads VILPLILLASHNTLQNFTAAI. The Extracellular portion of the chain corresponds to 45 to 135; it reads PTHHCRPPAD…LVCSHRALRQ (91 aa). Residues N56, N92, and N113 are each glycosylated (N-linked (GlcNAc...) asparagine). The helical transmembrane segment at 136–156 threads the bilayer; the sequence is LAQSLYMMGVLLGAMTFGCLA. The Cytoplasmic portion of the chain corresponds to 157–164; the sequence is DRLGRRKV. Residues 165–185 form a helical membrane-spanning segment; sequence LIFNYLQTAVSGTCAAFAPNF. At 186 to 195 the chain is on the extracellular side; that stretch reads PAYCAFRFLS. The helical transmembrane segment at 196–216 threads the bilayer; sequence GMSTAGVVLNCMTLNVEWMPI. Topologically, residues 217–224 are cytoplasmic; it reads HTRAYVGT. A helical transmembrane segment spans residues 225–245; sequence LTGYVYSLGQFLLAGMAYAVP. Over 246–248 the chain is Extracellular; it reads HWR. Residues 249 to 269 form a helical membrane-spanning segment; that stretch reads YLQLLVSAPFFAFFIYSWFFI. Over 270-337 the chain is Cytoplasmic; it reads ESARWYASSG…ELIRCPALRR (68 aa). A helical membrane pass occupies residues 338-358; sequence LFLCLSMLWFATSFAYYGLVM. Residues 359 to 368 lie on the Extracellular side of the membrane; sequence DLQGFGVSIY. A helical transmembrane segment spans residues 369 to 389; it reads LIQVIFGAVDLPAKLVSFLVI. Residues 390–395 lie on the Cytoplasmic side of the membrane; it reads NNVGRR. Residues 396–416 traverse the membrane as a helical segment; that stretch reads PAQMASLLLAGICILINGVVP. Topologically, residues 417 to 425 are extracellular; it reads KDKSIVRTS. The helical transmembrane segment at 426–446 threads the bilayer; it reads LAVLGKGCLASSFNCIFLYTG. The Cytoplasmic segment spans residues 447–456; it reads EVYPTMIRQT. The chain crosses the membrane as a helical span at residues 457–477; the sequence is GLGMGSTLARVGSIVSPLVSM. At 478–484 the chain is on the extracellular side; sequence TAELYPS. A helical membrane pass occupies residues 485–505; that stretch reads VPLFIYGAVPVAASAAIALLP. Topologically, residues 506 to 549 are cytoplasmic; the sequence is ETLGQPLPDTVQDVENRRRGKTRKQQEELQKQMVPLQASAQVKN. Residues 521–549 are disordered; sequence NRRRGKTRKQQEELQKQMVPLQASAQVKN.

The protein belongs to the major facilitator (TC 2.A.1) superfamily. Organic cation transporter (TC 2.A.1.19) family. In terms of processing, glycosylated. Glycosylation is necessary for proper targeting of the transporter to the plasma membrane.

The protein resides in the basolateral cell membrane. It is found in the basal cell membrane. It carries out the reaction (6R)-L-erythro-5,6,7,8-tetrahydrobiopterin(out) + a dicarboxylate(in) = (6R)-L-erythro-5,6,7,8-tetrahydrobiopterin(in) + a dicarboxylate(out). The catalysed reaction is L-erythro-7,8-dihydrobiopterin(out) + a dicarboxylate(in) = L-erythro-7,8-dihydrobiopterin(in) + a dicarboxylate(out). It catalyses the reaction L-sepiapterin(out) + a dicarboxylate(in) = L-sepiapterin(in) + a dicarboxylate(out). The enzyme catalyses prostaglandin F2alpha(out) + a dicarboxylate(in) = prostaglandin F2alpha(in) + a dicarboxylate(out). It carries out the reaction prostaglandin E2(out) + a dicarboxylate(in) = prostaglandin E2(in) + a dicarboxylate(out). The catalysed reaction is 3',5'-cyclic AMP(out) + a dicarboxylate(in) = 3',5'-cyclic AMP(in) + a dicarboxylate(out). It catalyses the reaction 3',5'-cyclic GMP(out) + a dicarboxylate(in) = 3',5'-cyclic GMP(in) + a dicarboxylate(out). The enzyme catalyses urate(out) + a dicarboxylate(in) = urate(in) + a dicarboxylate(out). It carries out the reaction kynurenate(out) + glutarate(in) = kynurenate(in) + glutarate(out). The catalysed reaction is (indol-3-yl)acetate(out) + a dicarboxylate(in) = (indol-3-yl)acetate(in) + a dicarboxylate(out). It catalyses the reaction indoxyl sulfate(out) + a dicarboxylate(in) = indoxyl sulfate(in) + a dicarboxylate(out). The enzyme catalyses N-benzoylglycine(out) + a dicarboxylate(in) = N-benzoylglycine(in) + a dicarboxylate(out). It carries out the reaction 3-carboxy-4-methyl-5-propyl-2-furanpropanoate(out) + a dicarboxylate(in) = 3-carboxy-4-methyl-5-propyl-2-furanpropanoate(in) + a dicarboxylate(out). Its function is as follows. Secondary active transporter that functions as a Na(+)-independent organic anion (OA)/dicarboxylate antiporter where the uptake of one molecule of OA into the cell is coupled with an efflux of one molecule of intracellular dicarboxylate such as 2-oxoglutarate or glutarate. Mediates the uptake of OA across the basolateral side of proximal tubule epithelial cells, thereby contributing to the renal elimination of endogenous OA from the systemic circulation into the urine. Functions as a biopterin transporters involved in the uptake and the secretion of coenzymes tetrahydrobiopterin (BH4), dihydrobiopterin (BH2) and sepiapterin to urine, thereby determining baseline levels of blood biopterins. Transports prostaglandin E2 (PGE2) and prostaglandin F2-alpha (PGF2-alpha) and may contribute to their renal excretion. Also mediates the uptake of cyclic nucleotides such as cAMP and cGMP. Involved in the transport of neuroactive tryptophan metabolites kynurenate (KYNA) and xanthurenate (XA) and may contribute to their secretion from the brain. May transport glutamate. Also involved in the disposition of uremic toxins and potentially toxic xenobiotics by the renal organic anion secretory pathway, helping reduce their undesired toxicological effects on the body. Uremic toxins include the indoxyl sulfate (IS), hippurate/N-benzoylglycine (HA), indole acetate (IA), 3-carboxy-4- methyl-5-propyl-2-furanpropionate (CMPF) and urate. Xenobiotics include the mycotoxin ochratoxin (OTA). May also contribute to the transport of organic compounds in testes across the blood-testis-barrier. The chain is Solute carrier family 22 member 6 from Bos taurus (Bovine).